We begin with the raw amino-acid sequence, 389 residues long: Tryptophan 2,3-dioxygenase (389 aa).

Residues 60 to 64 and R131 each bind substrate; that span reads FIITH. H316 lines the heme pocket. Position 331 (T331) interacts with substrate.

This sequence belongs to the tryptophan 2,3-dioxygenase family. As to quaternary structure, homotetramer. Dimer of dimers. Heme is required as a cofactor.

It catalyses the reaction L-tryptophan + O2 = N-formyl-L-kynurenine. The protein operates within amino-acid degradation; L-tryptophan degradation via kynurenine pathway; L-kynurenine from L-tryptophan: step 1/2. Its pathway is pigment biosynthesis; ommochrome biosynthesis. Its function is as follows. Heme-dependent dioxygenase that catalyzes the oxidative cleavage of the L-tryptophan (L-Trp) pyrrole ring and converts L-tryptophan to N-formyl-L-kynurenine. Catalyzes the oxidative cleavage of the indole moiety. The protein is Tryptophan 2,3-dioxygenase of Mayetiola destructor (Hessian fly).